A 94-amino-acid chain; its full sequence is Integration host factor subunit beta (94 aa).

The protein belongs to the bacterial histone-like protein family. In terms of assembly, heterodimer of an alpha and a beta chain.

Its function is as follows. This protein is one of the two subunits of integration host factor, a specific DNA-binding protein that functions in genetic recombination as well as in transcriptional and translational control. The polypeptide is Integration host factor subunit beta (Vibrio campbellii (strain ATCC BAA-1116)).